The sequence spans 393 residues: Bifunctional enzyme Fae/Hps (393 aa).

A formaldehyde-activating enzyme region spans residues 1–161 (MYLIGEALIG…HEKDRAAHAV (161 aa)). The active-site Proton donor is the histidine 17. 5 residues coordinate substrate: aspartate 19, leucine 48, lysine 66, threonine 68, and glutamine 83. Residues 162 to 393 (MGFKVPRLWD…IDQFRIMTDF (232 aa)) are 3-hexulose-6-phosphate synthase.

This sequence in the N-terminal section; belongs to the formaldehyde-activating enzyme family. In the C-terminal section; belongs to the HPS/KGPDC family. HPS subfamily.

It catalyses the reaction 5,6,7,8-tetrahydromethanopterin + formaldehyde = 5,10-methylenetetrahydromethanopterin + H2O. The enzyme catalyses D-ribulose 5-phosphate + formaldehyde = D-arabino-hex-3-ulose 6-phosphate. It functions in the pathway carbohydrate biosynthesis; D-ribose 5-phosphate biosynthesis. Functionally, catalyzes the condensation of formaldehyde with tetrahydromethanopterin (H(4)MPT) to 5,10-methylenetetrahydromethanopterin. In terms of biological role, catalyzes the reversible formation of ribulose-5-phosphate and formaldehyde from 3-hexulose-6-phosphate. This Methanospirillum hungatei JF-1 (strain ATCC 27890 / DSM 864 / NBRC 100397 / JF-1) protein is Bifunctional enzyme Fae/Hps.